The primary structure comprises 426 residues: Mannose-6-phosphate isomerase (426 aa).

Zn(2+) is bound by residues Gln112, His114, Glu139, and His277. Arg296 is a catalytic residue.

The protein belongs to the mannose-6-phosphate isomerase type 1 family. Zn(2+) serves as cofactor.

Its subcellular location is the cytoplasm. It carries out the reaction D-mannose 6-phosphate = D-fructose 6-phosphate. It functions in the pathway nucleotide-sugar biosynthesis; GDP-alpha-D-mannose biosynthesis; alpha-D-mannose 1-phosphate from D-fructose 6-phosphate: step 1/2. Involved in the synthesis of the GDP-mannose and dolichol-phosphate-mannose required for a number of critical mannosyl transfer reactions. The protein is Mannose-6-phosphate isomerase (PMI40) of Ogataea parapolymorpha (strain ATCC 26012 / BCRC 20466 / JCM 22074 / NRRL Y-7560 / DL-1) (Yeast).